We begin with the raw amino-acid sequence, 406 residues long: Tryptophan synthase beta chain (406 aa).

Lys99 is subject to N6-(pyridoxal phosphate)lysine.

This sequence belongs to the TrpB family. Tetramer of two alpha and two beta chains. Requires pyridoxal 5'-phosphate as cofactor.

The catalysed reaction is (1S,2R)-1-C-(indol-3-yl)glycerol 3-phosphate + L-serine = D-glyceraldehyde 3-phosphate + L-tryptophan + H2O. It participates in amino-acid biosynthesis; L-tryptophan biosynthesis; L-tryptophan from chorismate: step 5/5. Functionally, the beta subunit is responsible for the synthesis of L-tryptophan from indole and L-serine. The chain is Tryptophan synthase beta chain from Brucella anthropi (strain ATCC 49188 / DSM 6882 / CCUG 24695 / JCM 21032 / LMG 3331 / NBRC 15819 / NCTC 12168 / Alc 37) (Ochrobactrum anthropi).